The primary structure comprises 136 residues: DNA-directed RNA polymerase subunit omega (136 aa).

The protein belongs to the RNA polymerase subunit omega family. In terms of assembly, the RNAP catalytic core consists of 2 alpha, 1 beta, 1 beta' and 1 omega subunit. When a sigma factor is associated with the core the holoenzyme is formed, which can initiate transcription.

The catalysed reaction is RNA(n) + a ribonucleoside 5'-triphosphate = RNA(n+1) + diphosphate. Functionally, promotes RNA polymerase assembly. Latches the N- and C-terminal regions of the beta' subunit thereby facilitating its interaction with the beta and alpha subunits. In Acidiphilium cryptum (strain JF-5), this protein is DNA-directed RNA polymerase subunit omega.